A 263-amino-acid chain; its full sequence is UPF0758 protein NGR_c13970 (263 aa).

The 123-residue stretch at 141 to 263 (VLSSWSAVID…HVSMKGLRLF (123 aa)) folds into the MPN domain. Residues His-212, His-214, and Asp-225 each coordinate Zn(2+). A JAMM motif motif is present at residues 212–225 (HNHPSGDPTPSRAD).

This sequence belongs to the UPF0758 family.

This chain is UPF0758 protein NGR_c13970, found in Sinorhizobium fredii (strain NBRC 101917 / NGR234).